The primary structure comprises 229 residues: Extracellular small neutral protease (229 aa).

The signal sequence occupies residues 1-28 (MRMPLSVLTAAGLSLATLGLGTAGPASA). Positions 29–81 (TPTAEGAPVVAYDGSPSAGSPADAKAEAAANRAFFEAVLRSVAEKRAANPKST) are excised as a propeptide. D159 and T161 together coordinate Ca(2+). H166 contacts Zn(2+). E167 is an active-site residue. Positions 170 and 176 each coordinate Zn(2+). A disulfide bond links C182 and C195.

The protein belongs to the peptidase M7 family. In terms of assembly, monomer. Ca(2+) is required as a cofactor. Zn(2+) serves as cofactor.

The protein localises to the secreted. It catalyses the reaction Hydrolyzes proteins with a preference for Tyr or Phe in the P1' position. Has no action on amino-acid p-nitroanilides.. In terms of biological role, milk hydrolyzing. The sequence is that of Extracellular small neutral protease (snpA) from Streptomyces sp. (strain C5).